Consider the following 886-residue polypeptide: MTSQLIKKIVTGDEIRNAFLKFYSEKLHKIIPSASLIPDDPTVMLTIAGMLPFKPVFLGLKERPSKRATSSQKCIRTNDIENVGVTARHHTFFEMLGNFSFGDYFKREAIQWAWELVTNIYQLSVENIIVSVFHEDEESAKIWRDEIGIHPDRIVKLGEEDNFWSSGKTGPCGPCSELYYDFHPEKGLQNIDLEDGDRFIEFYNLVFMQYNRDSNGKLTDLKFKNIDTGMGLERMAQILQEKQNNYETDLIFPIIQKICEIANIDYFSSDDKNKISLKIIGDHTRAVIHLISDGVAASNLGRGYILRRLIRRMVRHGRLLGITNEFLPHIATVGINLMQNNYPDLKNNNDLILNEIKIEEIRFRETLERGEKLLDELISSGQKLISGFKAFELYDTYGFPLELTVEIAEENSISVDVKGFEEEMNAQKERAKAASSNIDLTLEGSLEREIDLFNKTVFNGYDLLLSEAEIKGIFLDSTLVKQASEGQKVLIVLDQTTFYGESGGQVGDIGTIFSKDLEVLVDNVMRKKNVFLHYGTIKKGILTIGQKVKTNVSSSNRAKAAANHTATHLLQSALKSVVNESVGQKGSLVAFNKLRFDFNSSNPISKDQISKIETLVNSWIMENHALEIKNMSKSEALEKGAVAMFGEKYDDEVRVVNVPGVSMELCGGTHVKTTSELGSFKIISEEGISAGVRRIEALSGQSALDYFSDRNALVNQLSDLLKANPNQLFERVNNLQAELINKNKEIQKMKDEIAYFKYSSIKSSAEIVNSFSILVNQIDGLDGNSLQSAALNLTSHLGNKAIVILGGIPNPENRKLLFVVSLGDDPVKIGLHAGKIINEIARICSGGGGGKPNFAQAGAKDIDKLSDALDYAKNYLQKTLDSHSDK.

4 residues coordinate Zn(2+): H564, H568, C666, and H670.

This sequence belongs to the class-II aminoacyl-tRNA synthetase family. The cofactor is Zn(2+).

The protein resides in the cytoplasm. The catalysed reaction is tRNA(Ala) + L-alanine + ATP = L-alanyl-tRNA(Ala) + AMP + diphosphate. Its function is as follows. Catalyzes the attachment of alanine to tRNA(Ala) in a two-step reaction: alanine is first activated by ATP to form Ala-AMP and then transferred to the acceptor end of tRNA(Ala). Also edits incorrectly charged Ser-tRNA(Ala) and Gly-tRNA(Ala) via its editing domain. This Prochlorococcus marinus (strain MIT 9312) protein is Alanine--tRNA ligase.